A 647-amino-acid polypeptide reads, in one-letter code: Serine/threonine-protein kinase PLK3 (647 aa).

The tract at residues 1–56 (MEPAAGFLSPRPFPRAAAPSSPPAGPGPPASASPRSEPGVLAGPQTPDASRLITDP) is disordered. Pro residues predominate over residues 20–31 (SSPPAGPGPPAS). In terms of domain architecture, Protein kinase spans 62 to 314 (YIKGRLLGKG…IEQILRHDFF (253 aa)). ATP contacts are provided by residues 68–76 (LGKGGFARC) and Lys-91. Asp-185 serves as the catalytic Proton acceptor. 2 consecutive POLO box domains span residues 464–542 (WVSK…YMEQ) and 563–646 (LLLQ…DRSP).

The protein belongs to the protein kinase superfamily. Ser/Thr protein kinase family. CDC5/Polo subfamily. Interacts with GOLGB1. Interacts (via the POLO-box domain) with CIB1; leading to inhibit PLK3 kinase activity. Post-translationally, phosphorylated in an ATM-dependent manner following DNA damage. Phosphorylated as cells enter mitosis and dephosphorylated as cells exit mitosis. In terms of tissue distribution, constitutively expressed in post-mitotic neurons.

It is found in the cell projection. The protein localises to the dendrite. It localises to the cytoplasm. Its subcellular location is the nucleus. The protein resides in the nucleolus. It is found in the golgi apparatus. The protein localises to the cytoskeleton. It localises to the microtubule organizing center. Its subcellular location is the centrosome. It carries out the reaction L-seryl-[protein] + ATP = O-phospho-L-seryl-[protein] + ADP + H(+). The catalysed reaction is L-threonyl-[protein] + ATP = O-phospho-L-threonyl-[protein] + ADP + H(+). Its function is as follows. Serine/threonine-protein kinase involved in cell cycle regulation, response to stress and Golgi disassembly. Polo-like kinases act by binding and phosphorylating proteins that are already phosphorylated on a specific motif recognized by the POLO box domains. Phosphorylates ATF2, BCL2L1, CDC25A, CDC25C, CHEK2, HIF1A, JUN, p53/TP53, p73/TP73, PTEN, TOP2A and VRK1. Involved in cell cycle regulation: required for entry into S phase and cytokinesis. Phosphorylates BCL2L1, leading to regulate the G2 checkpoint and progression to cytokinesis during mitosis. Plays a key role in response to stress: rapidly activated upon stress stimulation, such as ionizing radiation, reactive oxygen species (ROS), hyperosmotic stress, UV irradiation and hypoxia. Involved in DNA damage response and G1/S transition checkpoint by phosphorylating CDC25A, p53/TP53 and p73/TP73. Phosphorylates p53/TP53 in response to reactive oxygen species (ROS), thereby promoting p53/TP53-mediated apoptosis. Phosphorylates CHEK2 in response to DNA damage, promoting the G2/M transition checkpoint. Phosphorylates the transcription factor p73/TP73 in response to DNA damage, leading to inhibit p73/TP73-mediated transcriptional activation and pro-apoptotic functions. Phosphorylates HIF1A and JUN is response to hypoxia. Phosphorylates ATF2 following hyperosmotic stress in corneal epithelium. Also involved in Golgi disassembly during the cell cycle: part of a MEK1/MAP2K1-dependent pathway that induces Golgi fragmentation during mitosis by mediating phosphorylation of VRK1. May participate in endomitotic cell cycle, a form of mitosis in which both karyokinesis and cytokinesis are interrupted and is a hallmark of megakaryocyte differentiation, via its interaction with CIB1. The chain is Serine/threonine-protein kinase PLK3 (Plk3) from Rattus norvegicus (Rat).